The primary structure comprises 1162 residues: Isoleucine--tRNA ligase (1162 aa).

A 'HIGH' region motif is present at residues 50-60 (PSANGMPGIHH). Positions 710–714 (KMSKR) match the 'KMSKS' region motif. K713 is a binding site for ATP.

The protein belongs to the class-I aminoacyl-tRNA synthetase family. IleS type 2 subfamily. Monomer. The cofactor is Zn(2+).

It localises to the cytoplasm. The catalysed reaction is tRNA(Ile) + L-isoleucine + ATP = L-isoleucyl-tRNA(Ile) + AMP + diphosphate. Its function is as follows. Catalyzes the attachment of isoleucine to tRNA(Ile). As IleRS can inadvertently accommodate and process structurally similar amino acids such as valine, to avoid such errors it has two additional distinct tRNA(Ile)-dependent editing activities. One activity is designated as 'pretransfer' editing and involves the hydrolysis of activated Val-AMP. The other activity is designated 'posttransfer' editing and involves deacylation of mischarged Val-tRNA(Ile). The chain is Isoleucine--tRNA ligase from Bacteroides thetaiotaomicron (strain ATCC 29148 / DSM 2079 / JCM 5827 / CCUG 10774 / NCTC 10582 / VPI-5482 / E50).